The chain runs to 900 residues: uncharacterized protein (900 aa).

The segment covering 1–16 (MGSNKEAKNIDSKNDR) has biased composition (basic and acidic residues). 5 disordered regions span residues 1–84 (MGSN…KLSS), 103–160 (NSSR…PDPS), 512–556 (NFNQ…KKSG), 568–613 (LAST…KSAN), and 648–676 (KRSS…NSFP). Residues 17-27 (GLTSITSNKIS) show a composition bias toward polar residues. The segment covering 30–58 (KAHDNHTSSMITEHKNADKEKGKQEKESR) has biased composition (basic and acidic residues). Composition is skewed to low complexity over residues 63–76 (QSSS…PQVS) and 103–127 (NSSR…QLSK). The residue at position 105 (Ser105) is a Phosphoserine. The span at 129–143 (GLHHHHTSNNKHSHR) shows a compositional bias: basic residues. Positions 528–537 (SSRSLSLPSS) are enriched in low complexity. A compositionally biased stretch (basic residues) spans 543–553 (KRKKSPTKATK). Composition is skewed to low complexity over residues 570–601 (STSH…SSPP) and 665–676 (SPISSNSDNSFP).

This is an uncharacterized protein from Saccharomyces cerevisiae (strain ATCC 204508 / S288c) (Baker's yeast).